Here is a 159-residue protein sequence, read N- to C-terminus: MFNKIPMTLRGFNKLKSELKKLKYITRPCIVKAIANARQLGDLKENAEYHSAREEQSFCENRICEIENKLLRAQIIDITKIPFKGIVIFGSTVTVLQISTSNIFVYTIVGDDEANYKEFSISIHSPMSRALIGKKKNDIIKVNTPTGYIKYIIKKIEYI.

This sequence belongs to the GreA/GreB family.

Functionally, necessary for efficient RNA polymerase transcription elongation past template-encoded arresting sites. The arresting sites in DNA have the property of trapping a certain fraction of elongating RNA polymerases that pass through, resulting in locked ternary complexes. Cleavage of the nascent transcript by cleavage factors such as GreA or GreB allows the resumption of elongation from the new 3'terminus. GreA releases sequences of 2 to 3 nucleotides. This Buchnera aphidicola subsp. Cinara cedri (strain Cc) protein is Transcription elongation factor GreA.